We begin with the raw amino-acid sequence, 245 residues long: Protein OXIDATIVE STRESS 3 LIKE 6 (245 aa).

Residues 46–90 form a disordered region; sequence QIGIGLRMSNNNNKSPEESSDSSSSIGESSENEEEEEEDDAVSCQ. The segment covering 75-86 has biased composition (acidic residues); sequence SENEEEEEEDDA. Positions 143 to 151 match the Nuclear localization signal motif; sequence NKRRRLVIA. The kinase-inducible domain (KID) stretch occupies residues 203-230; it reads DDHRKIMMMMKNKKELMAQTRSCFCLSS.

The protein resides in the nucleus. Probable transcription factor. Promotes slightly the tolerance to cadmium (Cd) and to oxidizing chemicals (e.g. diamide). This is Protein OXIDATIVE STRESS 3 LIKE 6 from Arabidopsis thaliana (Mouse-ear cress).